The primary structure comprises 561 residues: 3-hydroxy-3-methylglutaryl-coenzyme A reductase 3 (561 aa).

2 helical membrane passes run 25–45 (PIRH…AYLM) and 69–89 (IFGL…AFVQ). Positions 90 to 145 (SIVSSSDDEEEDFLVGPARGSSAAAAVAPPPPPSSPAQCSLLGSPHDDAARERMPE) are linker. Residues 113–146 (AAAVAPPPPPSSPAQCSLLGSPHDDAARERMPEE) form a disordered region. Residues 134-143 (PHDDAARERM) are compositionally biased toward basic and acidic residues. A catalytic region spans residues 146–561 (EDEEIVSSVV…SSKDMSKVIS (416 aa)). Catalysis depends on Glu240, which acts as the Charge relay system. An N-linked (GlcNAc...) asparagine glycan is attached at Asn304. Residues Lys372 and Asp448 each act as charge relay system in the active site. The active-site Proton donor is the His546. N-linked (GlcNAc...) asparagine glycosylation occurs at Asn550.

It belongs to the HMG-CoA reductase family.

The protein resides in the endoplasmic reticulum membrane. It catalyses the reaction (R)-mevalonate + 2 NADP(+) + CoA = (3S)-3-hydroxy-3-methylglutaryl-CoA + 2 NADPH + 2 H(+). The protein operates within metabolic intermediate biosynthesis; (R)-mevalonate biosynthesis; (R)-mevalonate from acetyl-CoA: step 3/3. Its function is as follows. Catalyzes the synthesis of mevalonate. The specific precursor of all isoprenoid compounds present in plants. This is 3-hydroxy-3-methylglutaryl-coenzyme A reductase 3 (HMG3) from Oryza sativa subsp. japonica (Rice).